The primary structure comprises 283 residues: Dihydropteroate synthase (283 aa).

The Pterin-binding domain maps to 18–274 (PKIMGIVNLT…DVKATADALK (257 aa)). A Mg(2+)-binding site is contributed by N25. Residues T66, D99, N119, D190, K227, and 262-264 (RVH) each bind (7,8-dihydropterin-6-yl)methyl diphosphate.

Belongs to the DHPS family. Homodimer. The cofactor is Mg(2+).

The catalysed reaction is (7,8-dihydropterin-6-yl)methyl diphosphate + 4-aminobenzoate = 7,8-dihydropteroate + diphosphate. It functions in the pathway cofactor biosynthesis; tetrahydrofolate biosynthesis; 7,8-dihydrofolate from 2-amino-4-hydroxy-6-hydroxymethyl-7,8-dihydropteridine diphosphate and 4-aminobenzoate: step 1/2. Functionally, catalyzes the condensation of para-aminobenzoate (pABA) with 6-hydroxymethyl-7,8-dihydropterin diphosphate (DHPt-PP) to form 7,8-dihydropteroate (H2Pte), the immediate precursor of folate derivatives. This Neisseria meningitidis serogroup C protein is Dihydropteroate synthase (folP).